The sequence spans 372 residues: Homoserine O-acetyltransferase (372 aa).

The AB hydrolase-1 domain maps to 43–353 (NAILIFHALT…DKGHDSFLLK (311 aa)). Residue Ser148 is the Nucleophile of the active site. A substrate-binding site is contributed by Arg218. Residues Asp314 and His347 contribute to the active site. Asp348 contacts substrate.

Belongs to the AB hydrolase superfamily. MetX family. Homodimer.

The protein resides in the cytoplasm. The catalysed reaction is L-homoserine + acetyl-CoA = O-acetyl-L-homoserine + CoA. Its pathway is amino-acid biosynthesis; L-methionine biosynthesis via de novo pathway; O-acetyl-L-homoserine from L-homoserine: step 1/1. Transfers an acetyl group from acetyl-CoA to L-homoserine, forming acetyl-L-homoserine. This chain is Homoserine O-acetyltransferase, found in Pelagibacter ubique (strain HTCC1062).